Consider the following 178-residue polypeptide: Crossover junction endodeoxyribonuclease RuvC (178 aa).

Active-site residues include Asp21, Glu81, and His154. Mg(2+)-binding residues include Asp21, Glu81, and His154.

It belongs to the RuvC family. As to quaternary structure, homodimer which binds Holliday junction (HJ) DNA. The HJ becomes 2-fold symmetrical on binding to RuvC with unstacked arms; it has a different conformation from HJ DNA in complex with RuvA. In the full resolvosome a probable DNA-RuvA(4)-RuvB(12)-RuvC(2) complex forms which resolves the HJ. Mg(2+) is required as a cofactor.

The protein localises to the cytoplasm. It carries out the reaction Endonucleolytic cleavage at a junction such as a reciprocal single-stranded crossover between two homologous DNA duplexes (Holliday junction).. The RuvA-RuvB-RuvC complex processes Holliday junction (HJ) DNA during genetic recombination and DNA repair. Endonuclease that resolves HJ intermediates. Cleaves cruciform DNA by making single-stranded nicks across the HJ at symmetrical positions within the homologous arms, yielding a 5'-phosphate and a 3'-hydroxyl group; requires a central core of homology in the junction. The consensus cleavage sequence is 5'-(A/T)TT(C/G)-3'. Cleavage occurs on the 3'-side of the TT dinucleotide at the point of strand exchange. HJ branch migration catalyzed by RuvA-RuvB allows RuvC to scan DNA until it finds its consensus sequence, where it cleaves and resolves the cruciform DNA. The chain is Crossover junction endodeoxyribonuclease RuvC from Treponema denticola (strain ATCC 35405 / DSM 14222 / CIP 103919 / JCM 8153 / KCTC 15104).